Here is a 157-residue protein sequence, read N- to C-terminus: Phosphopantetheine adenylyltransferase (157 aa).

A substrate-binding site is contributed by S8. Residues 8–9 (SF) and H16 each bind ATP. K40, T72, and R86 together coordinate substrate. ATP contacts are provided by residues 87–89 (GLR), E97, and 122–128 (HSFLSSS).

It belongs to the bacterial CoaD family. As to quaternary structure, homohexamer. Mg(2+) serves as cofactor.

The protein localises to the cytoplasm. It catalyses the reaction (R)-4'-phosphopantetheine + ATP + H(+) = 3'-dephospho-CoA + diphosphate. It participates in cofactor biosynthesis; coenzyme A biosynthesis; CoA from (R)-pantothenate: step 4/5. In terms of biological role, reversibly transfers an adenylyl group from ATP to 4'-phosphopantetheine, yielding dephospho-CoA (dPCoA) and pyrophosphate. The chain is Phosphopantetheine adenylyltransferase from Prochlorococcus marinus (strain MIT 9303).